A 398-amino-acid polypeptide reads, in one-letter code: Probable peptidoglycan glycosyltransferase FtsW (398 aa).

Residues 1–25 are Cytoplasmic-facing; that stretch reads MCYGGTAMMAFADIKEALTPKPSAQ. A helical membrane pass occupies residues 26–46; the sequence is LYDVPLLYCMLMLMGVGFVMV. The Periplasmic portion of the chain corresponds to 47-69; it reads TSASMPTADRLFGNIYHFTIRHG. A helical transmembrane segment spans residues 70 to 90; sequence IFLALSFCLFWITTSVPMSWW. Residue Lys91 is a topological domain, cytoplasmic. The helical transmembrane segment at 92–112 threads the bilayer; it reads KANPYLLLVGLGLLLIVLIVG. The Periplasmic portion of the chain corresponds to 113–120; it reads REVNGSTR. Residues 121–141 traverse the membrane as a helical segment; it reads WIPIGPFNIQASELAKLFFFS. Topologically, residues 142–156 are cytoplasmic; the sequence is YISGYLVRKRSEVQE. Residues 157–177 form a helical membrane-spanning segment; it reads NIKGFIKPILVFAAYAGLILM. Residues 178–179 are Periplasmic-facing; that stretch reads QP. A helical transmembrane segment spans residues 180–200; it reads DLGTVVVMFVTTVGLLFLAGA. Residue Lys201 is a topological domain, cytoplasmic. A helical membrane pass occupies residues 202-222; sequence LWQFFVLILTGVALVIGLIVL. Residues 223-289 lie on the Periplasmic side of the membrane; the sequence is EPYRMARVIG…DFIFAVIAEE (67 aa). The helical transmembrane segment at 290–312 threads the bilayer; it reads LGFVGVSSILIVLGTLVFRALLI. Residues 313-324 lie on the Cytoplasmic side of the membrane; it reads GQNALKNGKEYE. The helical transmembrane segment at 325–345 threads the bilayer; the sequence is GYLALAIGIWFAFQTMVNVGA. Topologically, residues 346–356 are periplasmic; sequence SAGILPTKGLT. Residues 357–377 form a helical membrane-spanning segment; it reads LPFISYGGSSLLMMTIAAGIL. The Cytoplasmic segment spans residues 378-398; that stretch reads LRVDFETKMATKQATSGGAKR.

Belongs to the SEDS family. FtsW subfamily.

The protein resides in the cell inner membrane. It catalyses the reaction [GlcNAc-(1-&gt;4)-Mur2Ac(oyl-L-Ala-gamma-D-Glu-L-Lys-D-Ala-D-Ala)](n)-di-trans,octa-cis-undecaprenyl diphosphate + beta-D-GlcNAc-(1-&gt;4)-Mur2Ac(oyl-L-Ala-gamma-D-Glu-L-Lys-D-Ala-D-Ala)-di-trans,octa-cis-undecaprenyl diphosphate = [GlcNAc-(1-&gt;4)-Mur2Ac(oyl-L-Ala-gamma-D-Glu-L-Lys-D-Ala-D-Ala)](n+1)-di-trans,octa-cis-undecaprenyl diphosphate + di-trans,octa-cis-undecaprenyl diphosphate + H(+). It functions in the pathway cell wall biogenesis; peptidoglycan biosynthesis. Its function is as follows. Peptidoglycan polymerase that is essential for cell division. The sequence is that of Probable peptidoglycan glycosyltransferase FtsW from Pseudoalteromonas translucida (strain TAC 125).